The primary structure comprises 209 residues: ATP-dependent dethiobiotin synthetase BioD (209 aa).

13–18 is an ATP binding site; that stretch reads DIGKTV. Threonine 17 contributes to the Mg(2+) binding site. Lysine 33 is an active-site residue. Positions 47 and 100 each coordinate Mg(2+). ATP-binding positions include 100-103 and 184-186; these read EGAG and PRL.

This sequence belongs to the dethiobiotin synthetase family. In terms of assembly, homodimer. Requires Mg(2+) as cofactor.

Its subcellular location is the cytoplasm. The catalysed reaction is (7R,8S)-7,8-diammoniononanoate + CO2 + ATP = (4R,5S)-dethiobiotin + ADP + phosphate + 3 H(+). It participates in cofactor biosynthesis; biotin biosynthesis; biotin from 7,8-diaminononanoate: step 1/2. Its function is as follows. Catalyzes a mechanistically unusual reaction, the ATP-dependent insertion of CO2 between the N7 and N8 nitrogen atoms of 7,8-diaminopelargonic acid (DAPA, also called 7,8-diammoniononanoate) to form a ureido ring. This chain is ATP-dependent dethiobiotin synthetase BioD, found in Rhodopseudomonas palustris (strain BisB18).